A 270-amino-acid chain; its full sequence is uncharacterized protein (270 aa).

A signal peptide spans 1–23 (MFNFITFILFAVVCISYCHKSRG). 2 N-linked (GlcNAc...) asparagine glycosylation sites follow: N246 and N252.

The protein resides in the secreted. This is an uncharacterized protein from Caenorhabditis elegans.